Here is a 913-residue protein sequence, read N- to C-terminus: Alanine--tRNA ligase (913 aa).

Residues H608, H612, C711, and H715 each coordinate Zn(2+).

It belongs to the class-II aminoacyl-tRNA synthetase family. Zn(2+) is required as a cofactor.

The protein localises to the cytoplasm. The catalysed reaction is tRNA(Ala) + L-alanine + ATP = L-alanyl-tRNA(Ala) + AMP + diphosphate. Its function is as follows. Catalyzes the attachment of alanine to tRNA(Ala) in a two-step reaction: alanine is first activated by ATP to form Ala-AMP and then transferred to the acceptor end of tRNA(Ala). Also edits incorrectly charged Ser-tRNA(Ala) and Gly-tRNA(Ala) via its editing domain. This Methanocorpusculum labreanum (strain ATCC 43576 / DSM 4855 / Z) protein is Alanine--tRNA ligase.